Reading from the N-terminus, the 31-residue chain is Cytochrome b6-f complex subunit 6 (31 aa).

Residues Ile4 to Gly24 traverse the membrane as a helical segment.

This sequence belongs to the PetL family. As to quaternary structure, the 4 large subunits of the cytochrome b6-f complex are cytochrome b6, subunit IV (17 kDa polypeptide, PetD), cytochrome f and the Rieske protein, while the 4 small subunits are PetG, PetL, PetM and PetN. The complex functions as a dimer.

The protein resides in the plastid. It is found in the chloroplast thylakoid membrane. Component of the cytochrome b6-f complex, which mediates electron transfer between photosystem II (PSII) and photosystem I (PSI), cyclic electron flow around PSI, and state transitions. PetL is important for photoautotrophic growth as well as for electron transfer efficiency and stability of the cytochrome b6-f complex. This Oryza sativa subsp. japonica (Rice) protein is Cytochrome b6-f complex subunit 6.